The primary structure comprises 309 residues: Probable pyridoxal 5'-phosphate synthase subunit PDX1 (309 aa).

Asp-40 provides a ligand contact to D-ribose 5-phosphate. Lys-97 (schiff-base intermediate with D-ribose 5-phosphate) is an active-site residue. Gly-169 serves as a coordination point for D-ribose 5-phosphate. Arg-181 contacts D-glyceraldehyde 3-phosphate. D-ribose 5-phosphate-binding positions include Gly-230 and 251-252 (GS).

Belongs to the PdxS/SNZ family.

The enzyme catalyses aldehydo-D-ribose 5-phosphate + D-glyceraldehyde 3-phosphate + L-glutamine = pyridoxal 5'-phosphate + L-glutamate + phosphate + 3 H2O + H(+). The protein operates within cofactor biosynthesis; pyridoxal 5'-phosphate biosynthesis. Catalyzes the formation of pyridoxal 5'-phosphate from ribose 5-phosphate (RBP), glyceraldehyde 3-phosphate (G3P) and ammonia. The ammonia is provided by PDX2. Can also use ribulose 5-phosphate and dihydroxyacetone phosphate as substrates, resulting from enzyme-catalyzed isomerization of RBP and G3P, respectively. Also plays an indirect role in resistance to singlet oxygen-generating photosensitizers. The protein is Probable pyridoxal 5'-phosphate synthase subunit PDX1 (PDX1) of Hevea brasiliensis (Para rubber tree).